A 24-amino-acid polypeptide reads, in one-letter code: Hyaluronidase (24 aa).

In terms of tissue distribution, expressed by the venom gland.

It is found in the secreted. It catalyses the reaction Random hydrolysis of (1-&gt;4)-linkages between N-acetyl-beta-D-glucosamine and D-glucuronate residues in hyaluronate.. In terms of biological role, possesses high activity against hyaluronan in vitro. The polypeptide is Hyaluronidase (Tityus stigmurus (Brazilian scorpion)).